A 97-amino-acid chain; its full sequence is Large ribosomal subunit protein uL23 (97 aa).

Belongs to the universal ribosomal protein uL23 family. In terms of assembly, part of the 50S ribosomal subunit. Contacts protein L29, and trigger factor when it is bound to the ribosome.

Functionally, one of the early assembly proteins it binds 23S rRNA. One of the proteins that surrounds the polypeptide exit tunnel on the outside of the ribosome. Forms the main docking site for trigger factor binding to the ribosome. The polypeptide is Large ribosomal subunit protein uL23 (Thermoanaerobacter pseudethanolicus (strain ATCC 33223 / 39E) (Clostridium thermohydrosulfuricum)).